Consider the following 1046-residue polypeptide: MASSVGNVADSTEPTKRMLSFQGLAELAHREYQAGDFEAAERHCMQLWRQEPDNTGVLLLLSSIHFQCRRLDRSAHFSTLAIKQNPLLAEAYSNLGNVYKERGQLQEAIEHYRHALRLKPDFIDGYINLAAALVAAGDMEGAVQAYVSALQYNPDLYCVRSDLGNLLKALGRLEEAKACYLKAIETQPNFAVAWSNLGCVFNAQGEIWLAIHHFEKAVTLDPNFLDAYINLGNVLKEARIFDRAVAAYLRALSLSPNHAVVHGNLACVYYEQGLIDLAIDTYRRAIELQPHFPDAYCNLANALKEKGSVAEAEDCYNTALRLCPTHADSLNNLANIKREQGNIEEAVRLYRKALEVFPEFAAAHSNLASVLQQQGKLQEALMHYKEAIRISPTFADAYSNMGNTLKEMQDVQGALQCYTRAIQINPAFADAHSNLASIHKDSGNIPEAIASYRTALKLKPDFPDAYCNLAHCLQIVCDWTDYDERMKKLVSIVAEQLEKNRLPSVHPHHSMLYPLSHGFRKAIAERHGNLCLDKINVLHKPPYEHPKDLKLSDGRLRVGYVSSDFGNHPTSHLMQSIPGMHNPDKFEVFCYALSPDDGTNFRVKVMAEANHFIDLSQIPCNGKAADRIHQDGIHILVNMNGYTKGARNELFALRPAPIQAMWLGYPGTSGALFMDYIITDQETSPAEVAEQYSEKLAYMPHTFFIGDHANMFPHLKKKAVIDFKSNGHIYDNRIVLNGIDLKAFLDSLPDVKIVKMKCPDGGDNPDSSNTALNMPVIPMNTIAEAVIEMINRGQIQITINGFSISNGLATTQINNKAATGEEVPRTIIVTTRSQYGLPEDAIVYCNFNQLYKIDPSTLQMWANILKRVPNSVLWLLRFPAVGEPNIQQYAQNMGLPQNRIIFSPVAPKEEHVRRGQLADVCLDTPLCNGHTTGMDVLWAGTPMVTMPGETLASRVAASQLTCLGCLELIAKSRQEYEDIAVKLGTDLEYLKKIRGKVWKQRISSPLFNTKQYTMELERLYLQMWEHYAAGNKPDHMIKPVEVTESA.

Alanine 2 carries the post-translational modification N-acetylalanine. 2 positions are modified to phosphoserine; by GSK3-beta; alternate: serine 3 and serine 4. Serine 3 and serine 4 each carry an O-linked (GlcNAc) serine; alternate glycan. Serine 20 is subject to Phosphoserine. TPR repeat units lie at residues 21–54 (FQGLAELAHREYQAGDFEAAERHCMQLWRQEPDN), 89–122 (AEAYSNLGNVYKERGQLQEAIEHYRHALRLKPDF), 123–156 (IDGYINLAAALVAAGDMEGAVQAYVSALQYNPDL), 157–190 (YCVRSDLGNLLKALGRLEEAKACYLKAIETQPNF), 191–224 (AVAWSNLGCVFNAQGEIWLAIHHFEKAVTLDPNF), 225–258 (LDAYINLGNVLKEARIFDRAVAAYLRALSLSPNH), 259–292 (AVVHGNLACVYYEQGLIDLAIDTYRRAIELQPHF), 293–326 (PDAYCNLANALKEKGSVAEAEDCYNTALRLCPTH), 327–360 (ADSLNNLANIKREQGNIEEAVRLYRKALEVFPEF), 361–394 (AAAHSNLASVLQQQGKLQEALMHYKEAIRISPTF), 395–428 (ADAYSNMGNTLKEMQDVQGALQCYTRAIQINPAF), and 429–462 (ADAHSNLASIHKDSGNIPEAIASYRTALKLKPDF). Serine 399 carries an O-linked (GlcNAc) serine; by autocatalysis glycan. Phosphothreonine is present on threonine 454. Residues 463–473 (PDAYCNLAHCL) form a TPR 13; truncated repeat. The DFP motif motif lies at 464–466 (DAY). The short motif at 487-503 (KKLVSIVAEQLEKNRLP) is the Nuclear localization signal element. Histidine 508 (proton acceptor) is an active-site residue. Residues glutamine 849, lysine 852, 906-908 (APK), 911-914 (HVRR), 930-932 (HTT), and aspartate 935 each bind UDP. Phosphotyrosine is present on tyrosine 989. Positions 991 to 1010 (KKIRGKVWKQRISSPLFNTK) are required for phosphatidylinositol 3,4,5-triphosphate binding.

It belongs to the glycosyltransferase 41 family. O-GlcNAc transferase subfamily. Monomer; may exist in different oligomerization states in cells. Homotrimer, oligomerizes via TPR repeats 6 and 7. Trimerization is not necessary for activity in vitro, however it increases affinity for UDP-GlcNAc. Component of a THAP1/THAP3-HCFC1-OGT complex. Component of the NSL complex at least composed of MOF/KAT8, KANSL1, KANSL2, KANSL3, MCRS1, PHF20, OGT1/OGT, WDR5 and HCFC1. Found in a complex with KIF5B, RHOT1, RHOT2 and TRAK1. Found in a complex composed of at least SINHCAF, SIN3A, HDAC1, SAP30, RBBP4, OGT and TET1. Component of a complex composed of KMT2E/MLL5, OGT and USP7; the complex stabilizes KMT2E/MLL5, preventing KMT2E/MLL5 ubiquitination and proteasomal-mediated degradation. Interacts (via TPRs 1-6) with SIN3A; the interaction mediates transcriptional repression in parallel with histone deacetylase. Interacts (via TPR 5-6) with TET1, TET2 and TET3. Interacts (via TPR repeats 6 and 7) with ATXN10. Interacts with NSD2. Interacts with PROSER1; this interaction mediates TET2 O-GlcNAcylation and stability by promoting the interaction between OGT and TET2. In terms of processing, ubiquitinated by the SCF(FBXO31) complex, leading to its proteasomal degradation. Post-translationally, phosphorylation on Ser-3 or Ser-4 by GSK3-beta positively regulates its activity. Phosphorylation at Thr-454 by AMPK promotes nuclear localization. Glycosylated via autocatalysis; O-GlcNAcylation at Ser-399 promotes nuclear localization.

Its subcellular location is the cytoplasm. The protein resides in the nucleus. It is found in the cell membrane. It localises to the mitochondrion membrane. The protein localises to the cell projection. The catalysed reaction is L-seryl-[protein] + UDP-N-acetyl-alpha-D-glucosamine = 3-O-(N-acetyl-beta-D-glucosaminyl)-L-seryl-[protein] + UDP + H(+). The enzyme catalyses L-threonyl-[protein] + UDP-N-acetyl-alpha-D-glucosamine = 3-O-(N-acetyl-beta-D-glucosaminyl)-L-threonyl-[protein] + UDP + H(+). It participates in protein modification; protein glycosylation. Subject to product inhibition by UDP. Functionally, catalyzes the transfer of a single N-acetylglucosamine from UDP-GlcNAc to a serine or threonine residue in cytoplasmic and nuclear proteins resulting in their modification with a beta-linked N-acetylglucosamine (O-GlcNAc). Glycosylates a large and diverse number of proteins including histone H2B, AKT1, AMPK, ATG4B, CAPRIN1, EZH2, FNIP1, GSDMD, KRT7, LMNA, LMNB1, LMNB2, RPTOR, HOXA1, PFKL, KMT2E/MLL5, MAPT/TAU, TET2, RBL2, RET, NOD2 and HCFC1. Can regulate their cellular processes via cross-talk between glycosylation and phosphorylation or by affecting proteolytic processing. Involved in insulin resistance in muscle and adipocyte cells via glycosylating insulin signaling components and inhibiting the 'Thr-308' phosphorylation of AKT1, enhancing IRS1 phosphorylation and attenuating insulin signaling. Involved in glycolysis regulation by mediating glycosylation of 6-phosphofructokinase PFKL, inhibiting its activity. Plays a key role in chromatin structure by mediating O-GlcNAcylation of 'Ser-112' of histone H2B: recruited to CpG-rich transcription start sites of active genes via its interaction with TET proteins (TET1, TET2 or TET3). As part of the NSL complex indirectly involved in acetylation of nucleosomal histone H4 on several lysine residues. O-GlcNAcylation of 'Ser-75' of EZH2 increases its stability, and facilitating the formation of H3K27me3 by the PRC2/EED-EZH2 complex. Stabilizes KMT2E/MLL5 by mediating its glycosylation, thereby preventing KMT2E/MLL5 ubiquitination. Regulates circadian oscillation of the clock genes and glucose homeostasis in the liver. Stabilizes clock proteins BMAL1 and CLOCK through O-glycosylation, which prevents their ubiquitination and subsequent degradation. Promotes the CLOCK-BMAL1-mediated transcription of genes in the negative loop of the circadian clock such as PER1/2 and CRY1/2. O-glycosylates HCFC1 and regulates its proteolytic processing and transcriptional activity. Component of a THAP1/THAP3-HCFC1-OGT complex that is required for the regulation of the transcriptional activity of RRM1. Regulates mitochondrial motility in neurons by mediating glycosylation of TRAK1. Promotes autophagy by mediating O-glycosylation of ATG4B. Acts as a regulator of mTORC1 signaling by mediating O-glycosylation of RPTOR and FNIP1: O-GlcNAcylation of RPTOR in response to glucose sufficiency promotes activation of the mTORC1 complex. The protein is UDP-N-acetylglucosamine--peptide N-acetylglucosaminyltransferase 110 kDa subunit (Ogt) of Mus musculus (Mouse).